Consider the following 295-residue polypeptide: N-acetylmuramic acid 6-phosphate etherase (295 aa).

The SIS domain maps to 54–217 (VIAAFRRGGR…STASMVGIGK (164 aa)). Residue Glu82 is the Proton donor of the active site. Glu113 is an active-site residue.

Belongs to the GCKR-like family. MurNAc-6-P etherase subfamily. Homodimer.

The enzyme catalyses N-acetyl-D-muramate 6-phosphate + H2O = N-acetyl-D-glucosamine 6-phosphate + (R)-lactate. It participates in amino-sugar metabolism; N-acetylmuramate degradation. In terms of biological role, specifically catalyzes the cleavage of the D-lactyl ether substituent of MurNAc 6-phosphate, producing GlcNAc 6-phosphate and D-lactate. This chain is N-acetylmuramic acid 6-phosphate etherase, found in Geobacillus thermodenitrificans (strain NG80-2).